The following is a 330-amino-acid chain: Ketol-acid reductoisomerase (NADP(+)) (330 aa).

A KARI N-terminal Rossmann domain is found at 2 to 182; sequence IHVYYDKDAN…GCTKAGVIET (181 aa). NADP(+) contacts are provided by residues 25-28, R48, S51, S53, and 83-86; these read YGSQ and DEVQ. H108 is an active-site residue. An NADP(+)-binding site is contributed by G134. One can recognise a KARI C-terminal knotted domain in the interval 183–328; sequence TFKEETETDL…KKLRDMMPWI (146 aa). The Mg(2+) site is built by D191, E195, E227, and E231. A substrate-binding site is contributed by S252.

This sequence belongs to the ketol-acid reductoisomerase family. Mg(2+) is required as a cofactor.

It catalyses the reaction (2R)-2,3-dihydroxy-3-methylbutanoate + NADP(+) = (2S)-2-acetolactate + NADPH + H(+). The enzyme catalyses (2R,3R)-2,3-dihydroxy-3-methylpentanoate + NADP(+) = (S)-2-ethyl-2-hydroxy-3-oxobutanoate + NADPH + H(+). Its pathway is amino-acid biosynthesis; L-isoleucine biosynthesis; L-isoleucine from 2-oxobutanoate: step 2/4. The protein operates within amino-acid biosynthesis; L-valine biosynthesis; L-valine from pyruvate: step 2/4. Its function is as follows. Involved in the biosynthesis of branched-chain amino acids (BCAA). Catalyzes an alkyl-migration followed by a ketol-acid reduction of (S)-2-acetolactate (S2AL) to yield (R)-2,3-dihydroxy-isovalerate. In the isomerase reaction, S2AL is rearranged via a Mg-dependent methyl migration to produce 3-hydroxy-3-methyl-2-ketobutyrate (HMKB). In the reductase reaction, this 2-ketoacid undergoes a metal-dependent reduction by NADPH to yield (R)-2,3-dihydroxy-isovalerate. The chain is Ketol-acid reductoisomerase (NADP(+)) from Halothermothrix orenii (strain H 168 / OCM 544 / DSM 9562).